Consider the following 129-residue polypeptide: UPF0344 protein USA300HOU_0928 (129 aa).

4 helical membrane-spanning segments follow: residues 1–21, 36–56, 67–87, and 99–119; these read MLHL…ATYL, LHMI…WILI, MLLT…EVSI, and MFWI…ILPL.

This sequence belongs to the UPF0344 family.

The protein resides in the cell membrane. The chain is UPF0344 protein USA300HOU_0928 from Staphylococcus aureus (strain USA300 / TCH1516).